The primary structure comprises 510 residues: Pentatricopeptide repeat-containing protein At1g71060, mitochondrial (510 aa).

Residues 1–14 (MVFSRFFRVTGVNL) constitute a mitochondrion transit peptide. PPR repeat units lie at residues 127 to 157 (TTSN…MKAK), 161 to 195 (SKET…GFKM), 196 to 230 (ESSD…RFEP), 231 to 265 (DIKS…GFEP), 266 to 300 (DVVA…NCKP), 301 to 335 (SPHI…GFPL), 336 to 370 (EAPT…GVGP), 371 to 401 (NART…MSCE), 403 to 437 (TVST…GVLP), and 438 to 472 (GMHM…GIRP).

The protein belongs to the PPR family. P subfamily.

The protein resides in the mitochondrion. The sequence is that of Pentatricopeptide repeat-containing protein At1g71060, mitochondrial from Arabidopsis thaliana (Mouse-ear cress).